A 1024-amino-acid chain; its full sequence is Seizure 6-like protein (1024 aa).

A signal peptide spans 1-28 (MPAARPPAAGLRGISLFLALLLGSPAAA). At 29–958 (LERDALPEGD…ETSLEGGNMA (930 aa)) the chain is on the extracellular side. Disordered regions lie at residues 33–77 (ALPE…SQSA), 108–184 (RPKH…EVPL), and 212–234 (AHTL…EAPQ). Ser-49 is a glycosylation site (O-linked (GalNAc...) serine). A compositionally biased stretch (basic and acidic residues) spans 56–66 (SPGKEHPEERV). Residues 110 to 120 (KHALPPKKKLP) are compositionally biased toward basic residues. Polar residues predominate over residues 138 to 162 (SAATVQRAGSQPASQGLDLLSSSTE). 2 O-glycosylated at one site regions span residues 147 to 161 (SQPA…SSST) and 176 to 180 (SEEAS). Residues Cys-281 and Cys-308 are joined by a disulfide bond. A CUB 1 domain is found at 281–389 (CSVSFSNPEG…GTFQLHYQAF (109 aa)). N-linked (GlcNAc...) asparagine glycosylation is found at Asn-311, Asn-328, and Asn-350. The Sushi 1 domain occupies 391-450 (LSCNFPRRPDSGDVTVMDLHSGGVAHFHCHLGYELQGAKMLTCINASKPHWSSQEPICSA). 2 cysteine pairs are disulfide-bonded: Cys-393–Cys-433 and Cys-419–Cys-448. Asn-435, Asn-458, Asn-474, Asn-514, Asn-576, Asn-618, Asn-674, and Asn-742 each carry an N-linked (GlcNAc...) asparagine glycan. The CUB 2 domain occupies 452 to 562 (CGGAVHNATI…STFNIRFEAF (111 aa)). The region spanning 565-626 (GHCYEPYIQN…WNDTEPLCRA (62 aa)) is the Sushi 2 domain. 2 disulfide bridges follow: Cys-567–Cys-609 and Cys-594–Cys-624. The CUB 3 domain occupies 628 to 739 (CGGELSAVAG…QGFIMNYIEV (112 aa)). 3 consecutive Sushi domains span residues 743–802 (DSCS…FCEK), 804–867 (MYCT…HCVS), and 871–932 (LACD…VCKV). 6 disulfide bridges follow: Cys-745/Cys-787, Cys-773/Cys-800, Cys-806/Cys-848, Cys-834/Cys-865, Cys-873/Cys-915, and Cys-901/Cys-930. A helical membrane pass occupies residues 959–979 (LAIFIPVLIISLLLGGAYIYI). The Cytoplasmic portion of the chain corresponds to 980 to 1024 (TRCRYYSNLRLPLMYSHPYSQITVETEFDNPIYETGETREYEVSI).

It belongs to the SEZ6 family. O-glycosylated. In terms of tissue distribution, widely expressed, including adult and fetal brains and lungs. Not expressed in all lung cancer cell lines.

It localises to the endoplasmic reticulum membrane. In terms of biological role, may contribute to specialized endoplasmic reticulum functions in neurons. In Homo sapiens (Human), this protein is Seizure 6-like protein (SEZ6L).